The following is a 292-amino-acid chain: 33 kDa chaperonin (292 aa).

2 disulfides stabilise this stretch: cysteine 230–cysteine 232 and cysteine 263–cysteine 266.

Belongs to the HSP33 family. Post-translationally, under oxidizing conditions two disulfide bonds are formed involving the reactive cysteines. Under reducing conditions zinc is bound to the reactive cysteines and the protein is inactive.

It localises to the cytoplasm. Functionally, redox regulated molecular chaperone. Protects both thermally unfolding and oxidatively damaged proteins from irreversible aggregation. Plays an important role in the bacterial defense system toward oxidative stress. This chain is 33 kDa chaperonin, found in Salmonella paratyphi A (strain ATCC 9150 / SARB42).